A 118-amino-acid chain; its full sequence is Small ribosomal subunit protein uS13 (118 aa).

Positions 92–118 (RKGLPVRGQRTKTNARTRKGPRKPIRK) are disordered.

Belongs to the universal ribosomal protein uS13 family. As to quaternary structure, part of the 30S ribosomal subunit. Forms a loose heterodimer with protein S19. Forms two bridges to the 50S subunit in the 70S ribosome.

Its function is as follows. Located at the top of the head of the 30S subunit, it contacts several helices of the 16S rRNA. In the 70S ribosome it contacts the 23S rRNA (bridge B1a) and protein L5 of the 50S subunit (bridge B1b), connecting the 2 subunits; these bridges are implicated in subunit movement. Contacts the tRNAs in the A and P-sites. The chain is Small ribosomal subunit protein uS13 from Pseudomonas putida (strain W619).